The primary structure comprises 312 residues: Ribosomal protein L11 methyltransferase (312 aa).

Residues threonine 160, glycine 181, aspartate 203, and asparagine 246 each coordinate S-adenosyl-L-methionine.

This sequence belongs to the methyltransferase superfamily. PrmA family.

It localises to the cytoplasm. It catalyses the reaction L-lysyl-[protein] + 3 S-adenosyl-L-methionine = N(6),N(6),N(6)-trimethyl-L-lysyl-[protein] + 3 S-adenosyl-L-homocysteine + 3 H(+). Its function is as follows. Methylates ribosomal protein L11. In Staphylococcus aureus (strain USA300), this protein is Ribosomal protein L11 methyltransferase.